The chain runs to 458 residues: MGALGRVLLWLQLCAMTRAAYKLWVPNTSFDTASNWNQNRTPCAGDAVQFPADKMVSVLVRDSHAISDMLLPLDGELVLASGAALSAAGGDSDPACNPGAPLLFRNPDRFSWLDPHLWSSGTQAPGLFSVDAERVPCSYDDVLFPRDGSFRVALGPGPNPVHVRSVSAVGQTFSRDEDLTAFLASREGRLRFHGSGALRVGSQACTDASGCVCGNAEMLPWICASLLQPLGGRCPQAACQDPLLPQGQCCDLCGAIVSLTHDPTFDLERYRARLLDLFLKQPQYQGLQVAVSKVLRDAHTEIQVVLVETEHATGAAGQLGHALLQDAVAQGSVLGIVSATLRQSGKPMTADSELNQSSSGAGLAGGVAALVLLALLGTVLLLLHRSGRLRWRRHEDAEPVSAGLPLGFRNPIFDAIVFKQQPSVELPDSAQKVDILDIDTKFGCFVNPLFAGEAEAEA.

The N-terminal stretch at 1–19 is a signal peptide; sequence MGALGRVLLWLQLCAMTRA. The Extracellular portion of the chain corresponds to 20 to 362; that stretch reads AYKLWVPNTS…ELNQSSSGAG (343 aa). Asn-27 carries N-linked (GlcNAc...) asparagine glycosylation. 6 disulfide bridges follow: Cys-43-Cys-96, Cys-137-Cys-213, Cys-205-Cys-211, Cys-223-Cys-249, Cys-234-Cys-250, and Cys-239-Cys-253. Positions 67–87 are interaction with CUBN; the sequence is SDMLLPLDGELVLASGAALSA. The VWFC domain maps to 203 to 254; the sequence is QACTDASGCVCGNAEMLPWICASLLQPLGGRCPQAACQDPLLPQGQCCDLCG. An N-linked (GlcNAc...) asparagine glycan is attached at Asn-355. The chain crosses the membrane as a helical span at residues 363–383; sequence LAGGVAALVLLALLGTVLLLL. Topologically, residues 384 to 458 are cytoplasmic; the sequence is HRSGRLRWRR…LFAGEAEAEA (75 aa).

Interacts (via extracellular region) with CUBN/cubilin. This gives rise to a huge complex containing one AMN chain and three CUBN chains. In terms of processing, N-glycosylated. Post-translationally, a soluble form arises by proteolytic removal of the membrane anchor. In terms of tissue distribution, expressed in polarized epithelial cells which are specialized in resorption or transport, specifically kidney proximal tubules and intestinal epithelium.

Its subcellular location is the apical cell membrane. It is found in the cell membrane. The protein resides in the endosome membrane. It localises to the membrane. The protein localises to the coated pit. Functionally, membrane-bound component of the endocytic receptor formed by AMN and CUBN. Required for normal CUBN glycosylation and trafficking to the cell surface. The complex formed by AMN and CUBN is required for efficient absorption of vitamin B12. Required for normal CUBN-mediated protein transport in the kidney. In Mus musculus (Mouse), this protein is Protein amnionless (Amn).